We begin with the raw amino-acid sequence, 219 residues long: Maleylacetoacetate isomerase (219 aa).

A GST N-terminal domain is found at 4 to 87 (NKTVLYSYWR…YLEETHPENP (84 aa)). Glutathione contacts are provided by residues 14 to 19 (SSCSWR), Gln-45, 71 to 72 (QS), Gln-111, and 115 to 117 (NLK). Positions 92-217 (GSYERAIARQ…LPQNQPDAEP (126 aa)) constitute a GST C-terminal domain.

This sequence belongs to the GST superfamily. Zeta family. It depends on glutathione as a cofactor.

The catalysed reaction is 4-maleylacetoacetate = 4-fumarylacetoacetate. The protein operates within amino-acid degradation; L-phenylalanine degradation; acetoacetate and fumarate from L-phenylalanine: step 5/6. In Dictyostelium discoideum (Social amoeba), this protein is Maleylacetoacetate isomerase (mai).